Consider the following 302-residue polypeptide: UDP-3-O-acyl-N-acetylglucosamine deacetylase (302 aa).

Positions 82, 238, and 242 each coordinate Zn(2+). His265 functions as the Proton donor in the catalytic mechanism.

The protein belongs to the LpxC family. It depends on Zn(2+) as a cofactor.

The enzyme catalyses a UDP-3-O-[(3R)-3-hydroxyacyl]-N-acetyl-alpha-D-glucosamine + H2O = a UDP-3-O-[(3R)-3-hydroxyacyl]-alpha-D-glucosamine + acetate. It participates in glycolipid biosynthesis; lipid IV(A) biosynthesis; lipid IV(A) from (3R)-3-hydroxytetradecanoyl-[acyl-carrier-protein] and UDP-N-acetyl-alpha-D-glucosamine: step 2/6. Functionally, catalyzes the hydrolysis of UDP-3-O-myristoyl-N-acetylglucosamine to form UDP-3-O-myristoylglucosamine and acetate, the committed step in lipid A biosynthesis. This Leptospira biflexa serovar Patoc (strain Patoc 1 / Ames) protein is UDP-3-O-acyl-N-acetylglucosamine deacetylase.